Reading from the N-terminus, the 244-residue chain is 1-(5-phosphoribosyl)-5-[(5-phosphoribosylamino)methylideneamino] imidazole-4-carboxamide isomerase (244 aa).

The active-site Proton acceptor is the aspartate 8. Residue aspartate 129 is the Proton donor of the active site.

Belongs to the HisA/HisF family.

It is found in the cytoplasm. It catalyses the reaction 1-(5-phospho-beta-D-ribosyl)-5-[(5-phospho-beta-D-ribosylamino)methylideneamino]imidazole-4-carboxamide = 5-[(5-phospho-1-deoxy-D-ribulos-1-ylimino)methylamino]-1-(5-phospho-beta-D-ribosyl)imidazole-4-carboxamide. It functions in the pathway amino-acid biosynthesis; L-histidine biosynthesis; L-histidine from 5-phospho-alpha-D-ribose 1-diphosphate: step 4/9. This chain is 1-(5-phosphoribosyl)-5-[(5-phosphoribosylamino)methylideneamino] imidazole-4-carboxamide isomerase, found in Geobacter sulfurreducens (strain ATCC 51573 / DSM 12127 / PCA).